A 149-amino-acid polypeptide reads, in one-letter code: Transcriptional repressor NrdR (149 aa).

A zinc finger spans residues Cys-3 to Cys-34. The ATP-cone domain occupies Pro-49 to Glu-139.

Belongs to the NrdR family. Zn(2+) serves as cofactor.

Its function is as follows. Negatively regulates transcription of bacterial ribonucleotide reductase nrd genes and operons by binding to NrdR-boxes. The chain is Transcriptional repressor NrdR from Polaromonas sp. (strain JS666 / ATCC BAA-500).